A 443-amino-acid chain; its full sequence is Xaa-Pro dipeptidase (443 aa).

The Mn(2+) site is built by aspartate 244, aspartate 255, histidine 336, glutamate 381, and glutamate 420.

Belongs to the peptidase M24B family. Bacterial-type prolidase subfamily. Mn(2+) is required as a cofactor.

It carries out the reaction Xaa-L-Pro dipeptide + H2O = an L-alpha-amino acid + L-proline. Splits dipeptides with a prolyl residue in the C-terminal position. This is Xaa-Pro dipeptidase from Stenotrophomonas maltophilia (strain R551-3).